A 282-amino-acid polypeptide reads, in one-letter code: uncharacterized protein (282 aa).

This is an uncharacterized protein from Mycoplasma pneumoniae (strain ATCC 29342 / M129 / Subtype 1) (Mycoplasmoides pneumoniae).